A 224-amino-acid polypeptide reads, in one-letter code: Type II restriction enzyme BstVI (224 aa).

It belongs to the XhoI type II restriction endonuclease family.

It carries out the reaction Endonucleolytic cleavage of DNA to give specific double-stranded fragments with terminal 5'-phosphates.. Functionally, a P subtype restriction enzyme that recognizes the double-stranded sequence 5'-CTCGAG-3' and cleaves after C-1. The chain is Type II restriction enzyme BstVI from Geobacillus stearothermophilus (Bacillus stearothermophilus).